The primary structure comprises 415 residues: MSDYNYKPTLWTRADALKVHEDDPTTTQPVIDIAFPVMSEEVFIWDTMPLRDFDGEIISVNGWCIIFTLTADRNTDNPQFQDENGNYDITRDWEDRHGRARICYWYSRTGKDWIFGGRVMAEGVAPTTREWAGTPILLNDRGDIDLYYTCVTPGATIAKVRGKIVTSDQSVSLEGFQQVTSLFSADGTIYQTEEQNAFWNFRDPSPFIDRNDGKLYMLFEGNVAGPRGSHEITQAEMGNVPPGYEDVGGAKYQAGCVGLAVAKDLSGSEWQILPPLITAVGVNDQTERPHFVFQDGKYYLFTISHKYTFADNLTGPDGVYGFVSDKLTGPYTPMNSSGLVLGNPSSQPFQTYSHYVMPNGLVTSFIDSVPWKGKDYRIGGTEAPTVKILLKGDRSFIVDSFDYGYIPAMKDITLK.

Sucrose is bound by residues tryptophan 45, aspartate 46, alanine 132, arginine 202, and aspartate 203. The Nucleophile role is filled by aspartate 46. The active-site Proton donor/acceptor is the glutamate 287.

The protein belongs to the glycosyl hydrolase 68 family.

It localises to the secreted. It catalyses the reaction [6)-beta-D-fructofuranosyl-(2-&gt;](n) alpha-D-glucopyranoside + sucrose = [6)-beta-D-fructofuranosyl-(2-&gt;](n+1) alpha-D-glucopyranoside + D-glucose. Catalyzes the synthesis of levan, a fructose polymer, by transferring the fructosyl moiety from sucrose to a growing acceptor molecule. This Erwinia amylovora (Fire blight bacteria) protein is Levansucrase.